Reading from the N-terminus, the 215-residue chain is Peptide methionine sulfoxide reductase MsrA (215 aa).

Residue Cys58 is part of the active site.

Belongs to the MsrA Met sulfoxide reductase family.

The catalysed reaction is L-methionyl-[protein] + [thioredoxin]-disulfide + H2O = L-methionyl-(S)-S-oxide-[protein] + [thioredoxin]-dithiol. It carries out the reaction [thioredoxin]-disulfide + L-methionine + H2O = L-methionine (S)-S-oxide + [thioredoxin]-dithiol. Has an important function as a repair enzyme for proteins that have been inactivated by oxidation. Catalyzes the reversible oxidation-reduction of methionine sulfoxide in proteins to methionine. The polypeptide is Peptide methionine sulfoxide reductase MsrA (Pseudomonas syringae pv. tomato (strain ATCC BAA-871 / DC3000)).